We begin with the raw amino-acid sequence, 246 residues long: Tyrosine recombinase XerD-like (246 aa).

One can recognise a Core-binding (CB) domain in the interval 1–72 (MINDINNFIE…AVNQFLFFLY (72 aa)). Residues 84–246 (QETEKITLAQ…TPITLERYYR (163 aa)) enclose the Tyr recombinase domain. Residues Lys149 and Arg212 contribute to the active site. Tyr244 functions as the O-(3'-phospho-DNA)-tyrosine intermediate in the catalytic mechanism.

This sequence belongs to the 'phage' integrase family. XerD-like subfamily.

The protein localises to the cytoplasm. Functionally, putative tyrosine recombinase. Not involved in the cutting and rejoining of the recombining DNA molecules on dif(SL) site. This Streptococcus agalactiae serotype V (strain ATCC BAA-611 / 2603 V/R) protein is Tyrosine recombinase XerD-like.